The chain runs to 340 residues: uncharacterized protein (340 aa).

This is an uncharacterized protein from Archaeoglobus fulgidus (strain ATCC 49558 / DSM 4304 / JCM 9628 / NBRC 100126 / VC-16).